Here is a 134-residue protein sequence, read N- to C-terminus: MKALLNKDIREEIQALIEIAEENLSAAKILFENKLYRDAVARAYYAIFHSAKALLLTKNLNPKKHAGVIKMFGLYFVNEGYIEEIYGRIITKSYNLRWKADYTTDKPTEEEAESIIYEAEMFVDRIKKALKEIL.

It belongs to the UPF0332 family.

Putative toxin component of a putative type VII toxin-antitoxin (TA) system. Its cognate antitoxin might be MJ0604. In Methanocaldococcus jannaschii (strain ATCC 43067 / DSM 2661 / JAL-1 / JCM 10045 / NBRC 100440) (Methanococcus jannaschii), this protein is Putative toxin MJ0605.